Here is a 504-residue protein sequence, read N- to C-terminus: Maturase K (504 aa).

The protein belongs to the intron maturase 2 family. MatK subfamily.

Its subcellular location is the plastid. It localises to the chloroplast. Functionally, usually encoded in the trnK tRNA gene intron. Probably assists in splicing its own and other chloroplast group II introns. The protein is Maturase K of Draba nemorosa (Woodland whitlowgrass).